The primary structure comprises 287 residues: MDQIAKCIKEGTHTLFPFYDNLPDVNLFLGNSPLPSLEYGANYFLQLSRVNDLNRLPTDLLSLFTHEIMVQENDLEKVYDILNIHSVKSYGKTIKADAVVIDLSAKNKLFKKDRELIKSNNYLTENNLYISDYKMLTFEVFRPLFEMSSEKYCIIKLPTLFGRCVIDTTRVYCSLFKSVRLFKCANDSWLKDSAIIVASNACKKNIDYFMSHIRSVTKSLNWKESNNVQFSILKDSVDKEFIDKFLNFSTKVYESLYYVHSLLYSSMTSESKSIENEYQKKLTKLLL.

Heterodimer of a large and a small subunit.

It localises to the virion. The catalysed reaction is a 5'-end (5'-triphosphoguanosine)-ribonucleoside in mRNA + S-adenosyl-L-methionine = a 5'-end (N(7)-methyl 5'-triphosphoguanosine)-ribonucleoside in mRNA + S-adenosyl-L-homocysteine. Its function is as follows. Catalyzes the last reaction in the mRNA cap formation pathway. In Erythrocebus patas (Red guenon), this protein is mRNA-capping enzyme small subunit.